Here is an 827-residue protein sequence, read N- to C-terminus: Lon protease 2 (827 aa).

The segment at 1–22 (MSDEKKKGSAASAMPTAMAPPG) is disordered. A compositionally biased stretch (low complexity) spans 9-21 (SAASAMPTAMAPP). Positions 33 to 227 (LPILPLRNSV…LVLELLNRKR (195 aa)) constitute a Lon N-terminal domain. Residue 379–386 (GPPGVGKT) participates in ATP binding. A Lon proteolytic domain is found at 615–796 (TEVPGVATGL…DDVLKAALET (182 aa)). Active-site residues include Ser702 and Lys745. The segment at 799–827 (VGVAGTPGGEPGKEAPLPKPAESAPEVRA) is disordered.

The protein belongs to the peptidase S16 family. Homohexamer. Organized in a ring with a central cavity.

It localises to the cytoplasm. The catalysed reaction is Hydrolysis of proteins in presence of ATP.. ATP-dependent serine protease that mediates the selective degradation of mutant and abnormal proteins as well as certain short-lived regulatory proteins. Required for cellular homeostasis and for survival from DNA damage and developmental changes induced by stress. Degrades polypeptides processively to yield small peptide fragments that are 5 to 10 amino acids long. Binds to DNA in a double-stranded, site-specific manner. The protein is Lon protease 2 of Myxococcus xanthus.